A 154-amino-acid polypeptide reads, in one-letter code: MTHDNKLQVEAIKRGTVIDHIPAQVGFKLLTLFKLTATDQRITIGLNLPSNHLGRKDLIKIENIFLTEEQANQLAIYAPQATVNQIDDYDVVRKLVPTLPEHITGVLTCPNSNCISRSEPVSSSFSVKQRDGDVHLKCKYCEKEFERQAVLQDR.

4 residues coordinate Zn(2+): Cys-109, Cys-114, Cys-138, and Cys-141.

This sequence belongs to the PyrI family. In terms of assembly, contains catalytic and regulatory chains. Zn(2+) serves as cofactor.

Its function is as follows. Involved in allosteric regulation of aspartate carbamoyltransferase. In Pectobacterium carotovorum subsp. carotovorum (strain PC1), this protein is Aspartate carbamoyltransferase regulatory chain.